A 330-amino-acid chain; its full sequence is NADH-quinone oxidoreductase subunit H (330 aa).

9 helical membrane-spanning segments follow: residues L5 to L25, I44 to L64, F78 to I98, V122 to A142, V156 to I176, I192 to F212, M240 to I260, F271 to W293, and C310 to I330.

The protein belongs to the complex I subunit 1 family. As to quaternary structure, NDH-1 is composed of 14 different subunits. Subunits NuoA, H, J, K, L, M, N constitute the membrane sector of the complex.

It is found in the cell inner membrane. It carries out the reaction a quinone + NADH + 5 H(+)(in) = a quinol + NAD(+) + 4 H(+)(out). NDH-1 shuttles electrons from NADH, via FMN and iron-sulfur (Fe-S) centers, to quinones in the respiratory chain. The immediate electron acceptor for the enzyme in this species is believed to be ubiquinone. Couples the redox reaction to proton translocation (for every two electrons transferred, four hydrogen ions are translocated across the cytoplasmic membrane), and thus conserves the redox energy in a proton gradient. This subunit may bind ubiquinone. The sequence is that of NADH-quinone oxidoreductase subunit H from Campylobacter curvus (strain 525.92).